The primary structure comprises 887 residues: DNA mismatch repair protein MutS (887 aa).

626–633 is a binding site for ATP; it reads GPNMAGKS.

Belongs to the DNA mismatch repair MutS family.

This protein is involved in the repair of mismatches in DNA. It is possible that it carries out the mismatch recognition step. This protein has a weak ATPase activity. The chain is DNA mismatch repair protein MutS from Methanococcoides burtonii (strain DSM 6242 / NBRC 107633 / OCM 468 / ACE-M).